The primary structure comprises 201 residues: MEYLIGIQGPDYVLVASDRVAASNIVQMKDDHDKMFKMSEKILLLCVGEAGDTVQFAEYIQKNVQLYKMRNGYELSPTAAANFTRRNLADCLRSRTPYHVNLLLAGYDEHEGPALYYMDYLAALAKAPFAAHGYGAFLTLSILDRYYTPTISRERAVELLRKCLEELQKRFILNLPTFSVRVIDKDGIHNLENIAFPKRDS.

Met-1 is modified (N-acetylmethionine).

Belongs to the peptidase T1B family. In terms of assembly, the 26S proteasome consists of a 20S proteasome core and two 19S regulatory subunits. The 20S proteasome core is a barrel-shaped complex made of 28 subunits that are arranged in four stacked rings. The two outer rings are each formed by seven alpha subunits, and the two inner rings are formed by seven beta subunits. The proteolytic activity is exerted by three beta-subunits PSMB5, PSMB6 and PSMB7. As to expression, detected in liver (at protein level).

The protein resides in the cytoplasm. It is found in the nucleus. Its function is as follows. Non-catalytic component of the 20S core proteasome complex involved in the proteolytic degradation of most intracellular proteins. This complex plays numerous essential roles within the cell by associating with different regulatory particles. Associated with two 19S regulatory particles, forms the 26S proteasome and thus participates in the ATP-dependent degradation of ubiquitinated proteins. The 26S proteasome plays a key role in the maintenance of protein homeostasis by removing misfolded or damaged proteins that could impair cellular functions, and by removing proteins whose functions are no longer required. Associated with the PA200 or PA28, the 20S proteasome mediates ubiquitin-independent protein degradation. This type of proteolysis is required in several pathways including spermatogenesis (20S-PA200 complex) or generation of a subset of MHC class I-presented antigenic peptides (20S-PA28 complex). This chain is Proteasome subunit beta type-2 (Psmb2), found in Mus musculus (Mouse).